The following is an 807-amino-acid chain: Glycerol-3-phosphate acyltransferase (807 aa).

Positions 309–314 (CHRSHM) match the HXXXXD motif motif.

Belongs to the GPAT/DAPAT family.

The protein localises to the cell inner membrane. It carries out the reaction sn-glycerol 3-phosphate + an acyl-CoA = a 1-acyl-sn-glycero-3-phosphate + CoA. It functions in the pathway phospholipid metabolism; CDP-diacylglycerol biosynthesis; CDP-diacylglycerol from sn-glycerol 3-phosphate: step 1/3. The sequence is that of Glycerol-3-phosphate acyltransferase from Aeromonas hydrophila subsp. hydrophila (strain ATCC 7966 / DSM 30187 / BCRC 13018 / CCUG 14551 / JCM 1027 / KCTC 2358 / NCIMB 9240 / NCTC 8049).